The chain runs to 578 residues: Frizzled and smoothened-like protein Q (578 aa).

The first 23 residues, 1-23 (MKNSFLINILIIYYLFIILFVNS), serve as a signal peptide directing secretion. The Extracellular segment spans residues 24–233 (QDLKLGGSCE…GKTKILDRTN (210 aa)). The region spanning 27-157 (KLGGSCELID…GAPMFPINST (131 aa)) is the FZ domain. Intrachain disulfides connect C32–C95, C41–C88, C79–C128, and C121–C141. N-linked (GlcNAc...) asparagine glycosylation is found at N46, N64, N99, and N104. N-linked (GlcNAc...) asparagine glycosylation is found at N144, N155, N181, and N233. Residues 234–254 (YTLTSISFITCIFMILTFGVL) form a helical membrane-spanning segment. The Cytoplasmic portion of the chain corresponds to 255–261 (PNKITHR). Residues 262-282 (MESILSFACGGCITALSLFIQ) traverse the membrane as a helical segment. Residues 283–305 (SRQDNFNCSSDPGRFKSQSDYLC) are Extracellular-facing. N289 is a glycosylation site (N-linked (GlcNAc...) asparagine). The chain crosses the membrane as a helical span at residues 306-326 (LLTGLIFQFGAITSIFWSPMI). The Cytoplasmic portion of the chain corresponds to 327 to 341 (AYDFYITSTLGKIRK). Residues 342 to 362 (FGLYRIVLWSFIFVLTALPAF) form a helical membrane-spanning segment. Over 363-388 (GGKYSATVATNCWINSDDGSAWQYVS) the chain is Extracellular. Residues 389–409 (FYIPSWCAMGLICLFSILSVI) form a helical membrane-spanning segment. Residues 410 to 422 (NVSKMYIQTPNNR) are Cytoplasmic-facing. A helical membrane pass occupies residues 423–443 (ILFFNIKILITLLLFLFVLTF). Over 444-490 (ASSLKFYMEERMDTYFDAIAVWVECIGKGDPSQCELHAPGYDLKALN) the chain is Extracellular. A helical membrane pass occupies residues 491 to 511 (IVVIGILGFTVFIGYGLDPIV). Residues 512-578 (IHIWMESKKF…LKSTEINQQP (67 aa)) lie on the Cytoplasmic side of the membrane. The span at 544–556 (NNNNNETASTSSG) shows a compositional bias: low complexity. The tract at residues 544 to 578 (NNNNNETASTSSGNERKQTTVKMSNLKSTEINQQP) is disordered. Residues 563–578 (TVKMSNLKSTEINQQP) show a composition bias toward polar residues.

The protein belongs to the G-protein coupled receptor Fz/Smo family.

It is found in the membrane. In Dictyostelium discoideum (Social amoeba), this protein is Frizzled and smoothened-like protein Q (fslQ).